The sequence spans 667 residues: Cyclin-dependent kinase 17 (667 aa).

Disordered stretches follow at residues methionine 1–asparagine 70 and aspartate 85–methionine 184. 2 stretches are compositionally biased toward acidic residues: residues glutamate 99–aspartate 111 and aspartate 119–glutamate 144. Residues threonine 151–threonine 164 show a composition bias toward polar residues. The Protein kinase domain maps to tyrosine 328–leucine 609. ATP is bound by residues leucine 334 to valine 342 and lysine 357. Catalysis depends on aspartate 449, which acts as the Proton acceptor. Residues asparagine 454 and aspartate 467 each coordinate Mg(2+). Residues histidine 642–threonine 667 are disordered. Over residues histidine 644–threonine 653 the composition is skewed to basic residues.

The protein belongs to the protein kinase superfamily. CMGC Ser/Thr protein kinase family. CDC2/CDKX subfamily. In terms of assembly, interacts with cyy-1; the interaction is required to activate pct-1. It depends on Mg(2+) as a cofactor.

Its subcellular location is the cytoplasm. The protein resides in the cell projection. The protein localises to the dendrite. It localises to the axon. It carries out the reaction L-seryl-[protein] + ATP = O-phospho-L-seryl-[protein] + ADP + H(+). The enzyme catalyses L-threonyl-[protein] + ATP = O-phospho-L-threonyl-[protein] + ADP + H(+). Its function is as follows. Serine/threonine-protein kinase, which, in association with cyy-1, regulates the trafficking of synaptic vesicles in the DA9 motor neuron and probably also in the DD motor neurons and in RIA interneurons. In terms of biological role, sufficient for synaptic vesicle trafficking in the DA9 motor neuron. The chain is Cyclin-dependent kinase 17 from Caenorhabditis elegans.